The chain runs to 349 residues: Nuclear distribution protein nudE homolog 1-B (349 aa).

Positions 22–189 (VAMKYKQCSE…ELAVQQKQEK (168 aa)) form a coiled coil.

Belongs to the nudE family. In terms of assembly, self-associates. Interacts with pafah1b1. In terms of processing, phosphorylated in mitosis.

The protein localises to the cytoplasm. The protein resides in the cytoskeleton. Its subcellular location is the microtubule organizing center. It localises to the centrosome. It is found in the spindle. The protein localises to the chromosome. The protein resides in the centromere. Its subcellular location is the kinetochore. It localises to the cleavage furrow. It is found in the cytoplasmic vesicle membrane. Its function is as follows. Required for centrosome duplication and formation and function of the mitotic spindle. This Xenopus laevis (African clawed frog) protein is Nuclear distribution protein nudE homolog 1-B (nde1-b).